We begin with the raw amino-acid sequence, 417 residues long: Serine hydroxymethyltransferase (417 aa).

Residues L121 and 125-127 (GHL) each bind (6S)-5,6,7,8-tetrahydrofolate. K229 carries the post-translational modification N6-(pyridoxal phosphate)lysine. (6S)-5,6,7,8-tetrahydrofolate is bound at residue 355–357 (SPF).

It belongs to the SHMT family. As to quaternary structure, homodimer. Pyridoxal 5'-phosphate serves as cofactor.

It is found in the cytoplasm. The enzyme catalyses (6R)-5,10-methylene-5,6,7,8-tetrahydrofolate + glycine + H2O = (6S)-5,6,7,8-tetrahydrofolate + L-serine. The protein operates within one-carbon metabolism; tetrahydrofolate interconversion. It functions in the pathway amino-acid biosynthesis; glycine biosynthesis; glycine from L-serine: step 1/1. Its function is as follows. Catalyzes the reversible interconversion of serine and glycine with tetrahydrofolate (THF) serving as the one-carbon carrier. This reaction serves as the major source of one-carbon groups required for the biosynthesis of purines, thymidylate, methionine, and other important biomolecules. Also exhibits THF-independent aldolase activity toward beta-hydroxyamino acids, producing glycine and aldehydes, via a retro-aldol mechanism. This Proteus mirabilis (strain HI4320) protein is Serine hydroxymethyltransferase.